We begin with the raw amino-acid sequence, 342 residues long: Anthranilate phosphoribosyltransferase (342 aa).

5-phospho-alpha-D-ribose 1-diphosphate-binding positions include glycine 79, 82–83 (GD), threonine 87, 89–92 (NVST), 107–115 (KHGNRAATS), and serine 119. Glycine 79 lines the anthranilate pocket. A Mg(2+)-binding site is contributed by serine 91. Residue asparagine 110 participates in anthranilate binding. Arginine 165 contacts anthranilate. Mg(2+)-binding residues include aspartate 224 and glutamate 225.

This sequence belongs to the anthranilate phosphoribosyltransferase family. As to quaternary structure, homodimer. Mg(2+) serves as cofactor.

The enzyme catalyses N-(5-phospho-beta-D-ribosyl)anthranilate + diphosphate = 5-phospho-alpha-D-ribose 1-diphosphate + anthranilate. Its pathway is amino-acid biosynthesis; L-tryptophan biosynthesis; L-tryptophan from chorismate: step 2/5. Functionally, catalyzes the transfer of the phosphoribosyl group of 5-phosphorylribose-1-pyrophosphate (PRPP) to anthranilate to yield N-(5'-phosphoribosyl)-anthranilate (PRA). The chain is Anthranilate phosphoribosyltransferase from Rubrobacter xylanophilus (strain DSM 9941 / JCM 11954 / NBRC 16129 / PRD-1).